We begin with the raw amino-acid sequence, 145 residues long: L-alanine exporter AlaE (145 aa).

4 helical membrane-spanning segments follow: residues 16–36, 42–62, 86–106, and 111–131; these read FALV…LSGM, LSSR…YGLY, LFAY…VIGA, and ILTA…TYGY.

This sequence belongs to the AlaE exporter family.

The protein resides in the cell inner membrane. In terms of biological role, exports L-alanine. This Pectobacterium parmentieri (strain WPP163) (Pectobacterium wasabiae (strain WPP163)) protein is L-alanine exporter AlaE.